The sequence spans 435 residues: MMDEPWWEGRVASDVHCTLREKELKLPTFRAHSPLLKSRRFFVDILTLLSSHCQLCPAARHLAVYLLDHFMDRYNVTTSKQLYTVAVSCLLLANGVSLLSPRLKCSGMISAHCNLHLPGSSNSPASAPHPPPTPPQVAETTGKFEDREDHVPKLEQINSTRILSSQNFTLTKKELLSTELLLLEAFSWNLCLPTPAHFLDYYLLASVSQKDHHCHTWPTTCPRKTKECLKEYAHYFLEVTLQDHIFYKFQPSVVAAACVGASRICLQLSPYWTRDLQRISSYSLEHLSTCIEILLVVYDNVLKDAVAVKSQALAMVPGTPPTPTQVLFQPPAYPALGQPATTLAQFQTPVQDLCLAYRDSLQAHRSGSLLSGSTGSSLHTPYQPLQPLDMCPVPVPASLSMHMAIAAEPRHCLATTYGSSYFSGSHMFPTGCFDR.

Residues 14–191 (DVHCTLREKE…LLEAFSWNLC (178 aa)) enclose the Cyclin N-terminal domain. Positions 120–142 (SSNSPASAPHPPPTPPQVAETTG) are disordered.

Belongs to the cyclin family. Cyclin J subfamily.

The protein is Cyclin-J-like protein (CCNJL) of Homo sapiens (Human).